A 292-amino-acid chain; its full sequence is 4-hydroxybenzoate solanesyltransferase (292 aa).

9 helical membrane-spanning segments follow: residues 28-48 (LILM…LPPL), 49-69 (PLLG…CVVN), 97-117 (VGIG…FYLT), 118-138 (PLSF…PGAK), 140-160 (VFPV…LISW), 172-192 (WVLW…YAMA), 217-237 (VGIF…ILML), 239-259 (PLYW…YIQL), and 272-292 (IFGQ…LGWL).

This sequence belongs to the UbiA prenyltransferase family. It depends on Mg(2+) as a cofactor.

It is found in the cell inner membrane. It carries out the reaction all-trans-nonaprenyl diphosphate + 4-hydroxybenzoate = 4-hydroxy-3-(all-trans-nonaprenyl)benzoate + diphosphate. Functionally, catalyzes the prenylation of para-hydroxybenzoate (PHB) with an all-trans polyprenyl group. Mediates the second step in the final reaction sequence of plastoquinone-9 (PQ-9) biosynthesis, which is the condensation of the polyisoprenoid side chain with PHB, generating the first membrane-bound Q intermediate 4-hydroxy-3-solanesylbenzoate. This Synechocystis sp. (strain ATCC 27184 / PCC 6803 / Kazusa) protein is 4-hydroxybenzoate solanesyltransferase.